A 72-amino-acid polypeptide reads, in one-letter code: Large ribosomal subunit protein bL31 (72 aa).

C16, C18, C37, and C40 together coordinate Zn(2+).

The protein belongs to the bacterial ribosomal protein bL31 family. Type A subfamily. In terms of assembly, part of the 50S ribosomal subunit. Requires Zn(2+) as cofactor.

Its function is as follows. Binds the 23S rRNA. This Pseudomonas fluorescens (strain Pf0-1) protein is Large ribosomal subunit protein bL31.